We begin with the raw amino-acid sequence, 85 residues long: MGNNPSALKRARQNLKRNLRNVSVKSELKTIEKRCMSLIREGKKEEALEFFKFVSKKLDTAARKRIIHRNKAARKKSNLSILLLR.

Belongs to the bacterial ribosomal protein bS20 family.

In terms of biological role, binds directly to 16S ribosomal RNA. This Borrelia hermsii (strain HS1 / DAH) protein is Small ribosomal subunit protein bS20.